The sequence spans 91 residues: MGLQEDFEQYAEKAKTLPESTSNENKLILYGLYKQATVGDVNTARPGIFAQRDRAKWDAWKAVEGKSKEEAMSDYITKVKQLLEEAAAAAS.

In terms of domain architecture, ACB spans 3–88 (LQEDFEQYAE…VKQLLEEAAA (86 aa)). An acyl-CoA is bound by residues Lys15, 30 to 34 (YGLYK), Lys56, and Tyr75.

It belongs to the ACBP family. Highly expressed in leaves. Expressed at low levels in roots and seeds.

It localises to the cytoplasm. The protein resides in the cytosol. Functionally, binds medium- and long-chain acyl-CoA esters with high affinity. Can interact in vitro with palmitoyl-CoA, oleoyl-CoA, linoleoyl-CoA and linolenoyl-CoA. Binds phosphatidic acid (PA) and phosphatidylcholine (PC) in vitro. May play a role in the biosynthesis of phospholipids. In Oryza sativa subsp. japonica (Rice), this protein is Acyl-CoA-binding domain-containing protein 1.